A 309-amino-acid chain; its full sequence is Olfactory receptor 4A47 (309 aa).

Residues 1-23 are Extracellular-facing; sequence MEPRKNVTDFVLLGFTQNPKEQK. A glycan (N-linked (GlcNAc...) asparagine) is linked at asparagine 6. Residues 24–47 form a helical membrane-spanning segment; it reads VLFVMFLLFYILTMVGNLLIVVTV. At 48–55 the chain is on the cytoplasmic side; sequence TVSETLGS. Residues 56-77 traverse the membrane as a helical segment; it reads PMYFFLAGLSFIDIIYSSSISP. At 78-98 the chain is on the extracellular side; it reads RLISGLFFGNNSISFQSCMAQ. A glycan (N-linked (GlcNAc...) asparagine) is linked at asparagine 87. Cysteines 95 and 187 form a disulfide. The chain crosses the membrane as a helical span at residues 99-118; that stretch reads LFIEHIFGGSEVFLLLVMAY. Residues 119–137 lie on the Cytoplasmic side of the membrane; it reads DCYVAICKPLHYLVIMRQW. Residues 138-156 traverse the membrane as a helical segment; that stretch reads VCVVLLVVSWVGGFLHSVF. The Extracellular segment spans residues 157–193; the sequence is QLSIIYGLPFCGPNVIDHFFCDMYPLLKLVCTDTHAI. Residues 194 to 217 form a helical membrane-spanning segment; it reads GLLVVANGGLACTIVFLLLLISYG. Topologically, residues 218–233 are cytoplasmic; sequence VILHSLKNLSQKGRQK. Residues 234-256 traverse the membrane as a helical segment; that stretch reads ALSTCSSHMTVVVFFFVPCIFMY. Residues 257-267 are Extracellular-facing; the sequence is ARPARTFPIDK. A helical transmembrane segment spans residues 268–287; it reads SVSVFYTVITPMLNPLIYTL. The Cytoplasmic segment spans residues 288-309; it reads RNSEMTSAMKKLWRRDLISSST.

Belongs to the G-protein coupled receptor 1 family.

It is found in the cell membrane. Its function is as follows. Odorant receptor. This is Olfactory receptor 4A47 (OR4A47) from Homo sapiens (Human).